A 205-amino-acid chain; its full sequence is Outer-membrane lipoprotein LolB (205 aa).

A signal peptide spans 1–17 (MFLRHVIVFSFIALLAG). A lipid anchor (N-palmitoyl cysteine) is attached at cysteine 18. Cysteine 18 is lipidated: S-diacylglycerol cysteine.

This sequence belongs to the LolB family. In terms of assembly, monomer.

The protein localises to the cell outer membrane. Functionally, plays a critical role in the incorporation of lipoproteins in the outer membrane after they are released by the LolA protein. This Pseudomonas fluorescens (strain Pf0-1) protein is Outer-membrane lipoprotein LolB.